The following is a 103-amino-acid chain: Co-chaperonin GroES (103 aa).

It belongs to the GroES chaperonin family. In terms of assembly, heptamer of 7 subunits arranged in a ring. Interacts with the chaperonin GroEL.

The protein localises to the cytoplasm. Functionally, together with the chaperonin GroEL, plays an essential role in assisting protein folding. The GroEL-GroES system forms a nano-cage that allows encapsulation of the non-native substrate proteins and provides a physical environment optimized to promote and accelerate protein folding. GroES binds to the apical surface of the GroEL ring, thereby capping the opening of the GroEL channel. This chain is Co-chaperonin GroES, found in Prochlorococcus marinus (strain MIT 9215).